We begin with the raw amino-acid sequence, 447 residues long: Na(+)-translocating NADH-quinone reductase subunit A (447 aa).

This sequence belongs to the NqrA family. Composed of six subunits; NqrA, NqrB, NqrC, NqrD, NqrE and NqrF.

It carries out the reaction a ubiquinone + n Na(+)(in) + NADH + H(+) = a ubiquinol + n Na(+)(out) + NAD(+). Functionally, NQR complex catalyzes the reduction of ubiquinone-1 to ubiquinol by two successive reactions, coupled with the transport of Na(+) ions from the cytoplasm to the periplasm. NqrA to NqrE are probably involved in the second step, the conversion of ubisemiquinone to ubiquinol. The polypeptide is Na(+)-translocating NADH-quinone reductase subunit A (Neisseria gonorrhoeae (strain ATCC 700825 / FA 1090)).